Here is a 513-residue protein sequence, read N- to C-terminus: Lysine--tRNA ligase (513 aa).

Residues E423 and E430 each coordinate Mg(2+).

It belongs to the class-II aminoacyl-tRNA synthetase family. As to quaternary structure, homodimer. It depends on Mg(2+) as a cofactor.

The protein localises to the cytoplasm. It carries out the reaction tRNA(Lys) + L-lysine + ATP = L-lysyl-tRNA(Lys) + AMP + diphosphate. The polypeptide is Lysine--tRNA ligase (Anaeromyxobacter dehalogenans (strain 2CP-C)).